The sequence spans 61 residues: MAKKSQIVKWLKPKKYKVREYNRCRICGRPRGYIRKFGLCRLCFRELALKGELPGVRKASW.

Zn(2+) is bound by residues C24, C27, C40, and C43.

It belongs to the universal ribosomal protein uS14 family. Zinc-binding uS14 subfamily. In terms of assembly, part of the 30S ribosomal subunit. Contacts proteins S3 and S10. Zn(2+) serves as cofactor.

Its function is as follows. Binds 16S rRNA, required for the assembly of 30S particles and may also be responsible for determining the conformation of the 16S rRNA at the A site. The sequence is that of Small ribosomal subunit protein uS14 from Dictyoglomus thermophilum (strain ATCC 35947 / DSM 3960 / H-6-12).